Consider the following 144-residue polypeptide: Ethylene-responsive transcription factor ERF019 (144 aa).

Positions 13–72 form a DNA-binding region, AP2/ERF; it reads KYKGIRRRKWGKWVSEIRVPGTRDRLWLGSFSTAEGAAVAHDVAFFCLHQPDSLESLNFP.

Belongs to the AP2/ERF transcription factor family. ERF subfamily.

The protein resides in the nucleus. In terms of biological role, probably acts as a transcriptional activator. Binds to the GCC-box pathogenesis-related promoter element. May be involved in the regulation of gene expression by stress factors and by components of stress signal transduction pathways. The polypeptide is Ethylene-responsive transcription factor ERF019 (ERF019) (Arabidopsis thaliana (Mouse-ear cress)).